A 223-amino-acid polypeptide reads, in one-letter code: Germin-like protein 1-3 (223 aa).

Residues 1–22 form the signal peptide; that stretch reads MAKLILATFAVVFMALAATSLA. Cys32 and Cys50 are oxidised to a cystine. A glycan (N-linked (GlcNAc...) asparagine) is linked at Asn55. A Cupin type-1 domain is found at 64–212; sequence DGLMKAGNTG…AFQVDGGMVE (149 aa). The Mn(2+) site is built by His112, His114, Glu119, and His158.

Belongs to the germin family. In terms of assembly, oligomer (believed to be a pentamer but probably hexamer).

It localises to the secreted. Its subcellular location is the extracellular space. It is found in the apoplast. Its function is as follows. May play a role in plant defense. Probably has no oxalate oxidase activity even if the active site is conserved. The sequence is that of Germin-like protein 1-3 (GER8) from Oryza sativa subsp. japonica (Rice).